Consider the following 313-residue polypeptide: MAAISDLSFMYRWFKNCNLVRNLSDKYVFITGCDSGFGNLLARQLVDRGMRVLAACFTKEGAQKLQQDTSYQLQTILLDVTKTESIKAATQWVRDQVGEQGLWALVNNAGVGLPSGPNEWLTKEDFVKVINVNLVGLIEVTLHMLPMVKKARGRVVNMSSSGGRVAVIGGGYCISKFGVEAFSDSIRRELHYFGVKVSIIEPGNFRTAILGKDGLEKHMRKLWERLPPETRESYGEEYFRIYTDNLKSTMQLADPRISEVTNSMEHAIVSRSPRIRYNPGLDAKLLYLPLAKFPTPVTDFILSRYLPRPADSV.

29–53 serves as a coordination point for NADP(+); the sequence is FITGCDSGFGNLLARQLVDRGMRVL. S160 lines the substrate pocket. Catalysis depends on Y172, which acts as the Proton acceptor. S185 is modified (phosphoserine).

It belongs to the short-chain dehydrogenases/reductases (SDR) family.

It is found in the cytoplasm. The enzyme catalyses a N-[omega-(9R,10R)-epoxy-(13R)-hydroxy-(11E)-octadecenoyloxy]acyl-beta-D-glucosyl-(1&lt;-&gt;1)-sphing-4E-enine + NAD(+) = a N-[omega-(9R,10R)-epoxy-13-oxo-(11E)-octadecenoyloxy]acyl-beta-D-glucosyl-(1&lt;-&gt;1)-sphing-4E-enine + NADH + H(+). The catalysed reaction is a N-[omega-(9R,10R)-epoxy-(13R)-hydroxy-(11E)-octadecenoyloxy]-acylsphing-4E-enine + NAD(+) = a N-[omega-(9R,10R)-epoxy-13-oxo-(11E)-octadecenoyloxy]-acylsphing-4E-enine + NADH + H(+). Functionally, plays a crucial role in the formation of the epidermal permeability barrier. Catalyzes the NAD+-dependent dehydrogenation of the linoleate 9,10-trans-epoxy-11E-13-alcohol esterified in omega-O-acylceramides (such as in N-[omega-(9R,10R)-epoxy-(13R)-hydroxy-(11E)-octadecenoyloxy]-acylsphing-4E-enine) to the corresponding 13-ketone, the reactive moiety required for binding of epidermal ceramides to proteins. Displays weak conversion of all-trans-retinal to all-trans-retinol in the presence of NADH. Has apparently no steroid dehydrogenase activity. The sequence is that of Short-chain dehydrogenase/reductase family 9C member 7 (SDR9C7) from Bos taurus (Bovine).